The chain runs to 298 residues: Phospholipase A1 (298 aa).

A disulfide bond links C4 and C87. Residues N88 and N122 are each glycosylated (N-linked (GlcNAc...) asparagine). S134 serves as the catalytic Nucleophile. The active-site Charge relay system is D162. Intrachain disulfides connect C173/C178 and C216/C225. H227 functions as the Charge relay system in the catalytic mechanism. 3 disulfide bridges follow: C242–C266, C243–C291, and C259–C264.

The protein belongs to the AB hydrolase superfamily. Lipase family. As to expression, expressed by the venom gland.

It is found in the secreted. It catalyses the reaction a 1,2-diacyl-sn-glycero-3-phosphocholine + H2O = a 2-acyl-sn-glycero-3-phosphocholine + a fatty acid + H(+). Its function is as follows. Catalyzes the hydrolysis of phosphatidylcholine with phospholipase A1 activity. May act as an allergen and induce hemolytic activity. The protein is Phospholipase A1 of Vespula squamosa (Southern yellow jacket).